A 340-amino-acid chain; its full sequence is 4-hydroxy-2-oxovalerate aldolase (340 aa).

The Pyruvate carboxyltransferase domain maps to 8-260; the sequence is VILHDMSLRD…SHGINLYDIM (253 aa). Residue 16-17 participates in substrate binding; the sequence is RD. Aspartate 17 contributes to the Mn(2+) binding site. Histidine 20 (proton acceptor) is an active-site residue. Residues serine 170 and histidine 199 each coordinate substrate. Residues histidine 199 and histidine 201 each coordinate Mn(2+). Residue tyrosine 290 coordinates substrate.

It belongs to the 4-hydroxy-2-oxovalerate aldolase family.

The catalysed reaction is (S)-4-hydroxy-2-oxopentanoate = acetaldehyde + pyruvate. The chain is 4-hydroxy-2-oxovalerate aldolase from Shewanella pealeana (strain ATCC 700345 / ANG-SQ1).